The following is a 201-amino-acid chain: Iron-sulfur flavoprotein AF_1896 (201 aa).

The [4Fe-4S] cluster site is built by Cys46, Cys49, Cys52, and Cys57.

The protein belongs to the SsuE family. Isf subfamily. Homodimer. The cofactor is FMN. [4Fe-4S] cluster serves as cofactor.

Its function is as follows. Redox-active protein probably involved in electron transport. The polypeptide is Iron-sulfur flavoprotein AF_1896 (Archaeoglobus fulgidus (strain ATCC 49558 / DSM 4304 / JCM 9628 / NBRC 100126 / VC-16)).